The sequence spans 173 residues: Large ribosomal subunit protein uL10 (173 aa).

It belongs to the universal ribosomal protein uL10 family. In terms of assembly, part of the ribosomal stalk of the 50S ribosomal subunit. The N-terminus interacts with L11 and the large rRNA to form the base of the stalk. The C-terminus forms an elongated spine to which L12 dimers bind in a sequential fashion forming a multimeric L10(L12)X complex.

In terms of biological role, forms part of the ribosomal stalk, playing a central role in the interaction of the ribosome with GTP-bound translation factors. This chain is Large ribosomal subunit protein uL10, found in Bifidobacterium longum (strain DJO10A).